The following is a 344-amino-acid chain: uncharacterized protein (344 aa).

6 helical membrane-spanning segments follow: residues 155-175 (IARITLAPLGMIFLVYSIFLV), 181-201 (WGLGGIIFFLGVYFMVKAYGW), 221-241 (LSFIFYVTSAILLIISIVNGF), 254-274 (ISSFIFYSTWWFVLSGIFALL), 291-311 (FTIIFLLIAFGLIVWASAAYV), and 319-339 (ALQNLAGAIVGAILIAAIGVF).

It to M.jannaschii MJ1032.

It is found in the cell membrane. This is an uncharacterized protein from Archaeoglobus fulgidus (strain ATCC 49558 / DSM 4304 / JCM 9628 / NBRC 100126 / VC-16).